A 301-amino-acid polypeptide reads, in one-letter code: GTP cyclohydrolase FolE2 (301 aa).

Belongs to the GTP cyclohydrolase IV family.

It catalyses the reaction GTP + H2O = 7,8-dihydroneopterin 3'-triphosphate + formate + H(+). Its pathway is cofactor biosynthesis; 7,8-dihydroneopterin triphosphate biosynthesis; 7,8-dihydroneopterin triphosphate from GTP: step 1/1. Converts GTP to 7,8-dihydroneopterin triphosphate. This Pseudomonas savastanoi pv. phaseolicola (strain 1448A / Race 6) (Pseudomonas syringae pv. phaseolicola (strain 1448A / Race 6)) protein is GTP cyclohydrolase FolE2.